The sequence spans 169 residues: Histone H1.9 (169 aa).

Composition is skewed to polar residues over residues 1 to 10 (MSLVSPSPDS) and 19 to 36 (DAST…IGPN). The disordered stretch occupies residues 1 to 36 (MSLVSPSPDSNAVMAGDQDASTSQVPSQSESKIGPN). The region spanning 43–116 (RKPTMSKVIL…GASGSFRLGK (74 aa)) is the H15 domain. Phosphoserine is present on residues Ser62 and Ser65. Residues 118–142 (QAFKSKCKAKRRQRRQKPGQRRTGS) show a composition bias toward basic residues. The segment at 118-154 (QAFKSKCKAKRRQRRQKPGQRRTGSRRSLLGSKKSNN) is disordered.

The protein belongs to the histone H1/H5 family.

It is found in the nucleus. Its subcellular location is the chromosome. In terms of biological role, DNA-binding protein that may be implicated in chromatin remodeling and/or transcriptional regulation during spermiogenesis, the process of spermatid maturation into spermatozoa. The protein is Histone H1.9 of Rattus norvegicus (Rat).